The chain runs to 126 residues: Protein translocase subunit SecE (126 aa).

The next 3 membrane-spanning stretches (helical) occupy residues 18–38 (LKWV…YLYG), 40–60 (LSVV…LGVA), and 97–117 (IVLA…GIMV).

The protein belongs to the SecE/SEC61-gamma family. In terms of assembly, component of the Sec protein translocase complex. Heterotrimer consisting of SecY, SecE and SecG subunits. The heterotrimers can form oligomers, although 1 heterotrimer is thought to be able to translocate proteins. Interacts with the ribosome. Interacts with SecDF, and other proteins may be involved. Interacts with SecA.

It localises to the cell inner membrane. Functionally, essential subunit of the Sec protein translocation channel SecYEG. Clamps together the 2 halves of SecY. May contact the channel plug during translocation. This is Protein translocase subunit SecE from Vibrio cholerae serotype O1 (strain ATCC 39315 / El Tor Inaba N16961).